A 440-amino-acid chain; its full sequence is Thymidine phosphorylase (440 aa).

The protein belongs to the thymidine/pyrimidine-nucleoside phosphorylase family. In terms of assembly, homodimer.

It carries out the reaction thymidine + phosphate = 2-deoxy-alpha-D-ribose 1-phosphate + thymine. The protein operates within pyrimidine metabolism; dTMP biosynthesis via salvage pathway; dTMP from thymine: step 1/2. The enzymes which catalyze the reversible phosphorolysis of pyrimidine nucleosides are involved in the degradation of these compounds and in their utilization as carbon and energy sources, or in the rescue of pyrimidine bases for nucleotide synthesis. The protein is Thymidine phosphorylase of Rhizobium meliloti (strain 1021) (Ensifer meliloti).